A 313-amino-acid chain; its full sequence is Serine/threonine-protein phosphatase PP2A-3 catalytic subunit (313 aa).

Residues Asp61, His63, Asp89, and Asn121 each contribute to the Mn(2+) site. Catalysis depends on His122, which acts as the Proton donor. The Mn(2+) site is built by His171 and His245. Leu313 is modified (leucine methyl ester).

The protein belongs to the PPP phosphatase family. PP-2A subfamily. PP2A consists of a common heterodimeric core enzyme, composed of a 36 kDa catalytic subunit (subunit C) and a 65 kDa constant regulatory subunit (subunit A), that associates with a variety of regulatory subunits such as subunits B (the R2/B/PR55/B55, R3/B''/PR72/PR130/PR59 and R5/B'/B56 families). Interacts with ACR4. Interacts with TAP46. Interacts with SIC/RON3. It depends on Mn(2+) as a cofactor. Reversibly methyl esterified on Leu-313 by leucine carboxyl methyltransferase 1 (LCMT1) and pectin methylesterase 1 (PME1). Carboxyl methylation influences the affinity of the catalytic subunit for the different regulatory subunits, thereby modulating the PP2A holoenzyme's substrate specificity, enzyme activity and cellular localization. In terms of processing, phosphorylation of either threonine (by autophosphorylation-activated protein kinase) or tyrosine results in inactivation of the phosphatase. Auto-dephosphorylation has been suggested as a mechanism for reactivation.

It is found in the cytoplasm. The catalysed reaction is O-phospho-L-seryl-[protein] + H2O = L-seryl-[protein] + phosphate. It catalyses the reaction O-phospho-L-threonyl-[protein] + H2O = L-threonyl-[protein] + phosphate. Functions redundantly with PP2A4, and is involved in establishing auxin gradients, apical-basal axis of polarity and root and shoot apical meristem during embryogenesis. May dephosphorylate PIN1 and regulate its subcellular distribution for polar auxin transport. Involved in the regulation of formative cell division in roots by dephosphorylating ACR4 protein kinase. The sequence is that of Serine/threonine-protein phosphatase PP2A-3 catalytic subunit from Arabidopsis thaliana (Mouse-ear cress).